Reading from the N-terminus, the 594-residue chain is Arginine--tRNA ligase (594 aa).

The 'HIGH' region signature appears at 139 to 149; it reads ANPTGPLHVGH.

The protein belongs to the class-I aminoacyl-tRNA synthetase family. Monomer.

The protein resides in the cytoplasm. The catalysed reaction is tRNA(Arg) + L-arginine + ATP = L-arginyl-tRNA(Arg) + AMP + diphosphate. This chain is Arginine--tRNA ligase, found in Burkholderia mallei (strain NCTC 10247).